Reading from the N-terminus, the 470-residue chain is MEKAKFKVVIVGGSITGLTLAHCLHQANIDHIVLERRHEIAPQEGASIGLWPNGGQILDQLGLYGELEKLTEPLNVMHVVYPDGFSYSNTLFRQIRERFGYPVFFMDRQKLLDVLYKTYPNKSKILVNKLVTELRQSDGAACVMTDDGSTYEGNLIVGADGVHSRLRSEIWRLADINQPGLVTAEEKQSMTVEYSCIFGISSPLPGLASGEHVNAYMNGLTVLTFHGKGGRVYWFVIQKLDRKFTYPNVPRFSLDDAERSCTALAKIRIWRDICIGHLWQAREVASMTALEENIFTTWHYQRAILLGDSIHKMTPNIGQGANSGIEDAALLASLINHLVNIQAIKQPSDLTVNRMLENFEAIRYPRMEKIYRRSKFGVRMHTRDDLFKRILGRYVIPLTKDRLAVMASQLIVDGAVLDFLPQPKRRSGPGWPKPGNCRDGQNGHKRIQYILMSIVLVAPAWVYIFSSLVW.

The first 23 residues, 1–23 (MEKAKFKVVIVGGSITGLTLAHC), serve as a signal peptide directing secretion. FAD-binding residues include Glu-35, Gly-49, and Arg-108. An N-linked (GlcNAc...) asparagine glycan is attached at Asn-121. The active site involves Tyr-216. 2 residues coordinate FAD: Asp-308 and Ala-321. Residues 450–470 (ILMSIVLVAPAWVYIFSSLVW) traverse the membrane as a helical segment.

Belongs to the paxM FAD-dependent monooxygenase family. It depends on FAD as a cofactor.

It localises to the membrane. It catalyses the reaction (3R)-3-farnesyl-6-hydroxy-2,3,5-trimethyl-4-oxocyclohexa-1,5-diene-1-carboxylate + 2-oxoglutarate + O2 = (3R)-[(10S)-11-epoxyfarnesyl]-2,3,5-trimethyl-6-oxido-4-oxocyclohexa-1,5-diene-1-carboxylate + succinate + CO2. The protein operates within secondary metabolite biosynthesis; terpenoid biosynthesis. Its function is as follows. FAD-dependent monooxygenase; part of the gene cluster that mediates the biosynthesis of novofumigatonin, a heavily oxygenated meroterpenoid containing a unique orthoester moiety. The first step of the pathway is the synthesis of 3,5-dimethylorsellinic acid (DMOA) by the polyketide synthase nvfA via condensation of one acetyl-CoA starter unit with 3 malonyl-CoA units and 2 methylations. DMOA is then converted to farnesyl-DMOA by the farnesyltransferase nvfB. Epoxydation by FAD-dependent monooxygenase nvfK, followed by a protonation-initiated cyclization catalyzed by the terpene cyclase nvfL leads to the production of asnavolin H. The short chain dehydrogenase nvfC then as a 3-OH dehydrogenase of asnovolin H to yield chemesin D. There are two branches to synthesize asnovolin A from chemesin D. In one branch, chemesin D undergoes Baeyer-Villiger oxidation by nvfH, methylation by nvfJ, and enoyl reduction by the nvfM D enoylreductase that reduces the double bond between C-5'and C-6', to form respectively asnovolin I, asnovolin K, and asnovolin A. In the other branch, the methylation precedes the Baeyer-Villiger oxidation and the enoyl reduction to yield asnovolin A via the asnovolin J intermediate. Asnovolin A is further converted to fumigatonoid A by the Fe(II)/2-oxoglutarate-dependent dioxygenase nvfI that catalyzes an endoperoxidation reaction. The alpha/beta hydrolase nvfD then acts as an epimerase that converts fumigatonoid A to its C-5' epimer, which then undergoes spontaneous or nvfD-catalyzed lactonization. The following step utilizes the ketoreductase nvfG to produce fumigatonoid B. The dioxygenase nvfE further converts fumigatonoid B into fumigatonoid C. Finally the Fe(II)/2-oxoglutarate-dependent dioxygenase nvfF catalyzes two rounds of oxidation to transform fumigatonoid C into the end product, novofumigatonin A. This Aspergillus novofumigatus (strain IBT 16806) protein is FAD-dependent monooxygenase nvfK.